A 61-amino-acid chain; its full sequence is Probable tautomerase LMOf2365_2536 (61 aa).

The Proton acceptor; via imino nitrogen role is filled by Pro-2.

Belongs to the 4-oxalocrotonate tautomerase family.

The sequence is that of Probable tautomerase LMOf2365_2536 from Listeria monocytogenes serotype 4b (strain F2365).